The primary structure comprises 33 residues: SIEIEIDGVTVTTEESRTLVDVAAEAGVYIPTL.

In terms of domain architecture, 2Fe-2S ferredoxin-type spans 1–33; sequence SIEIEIDGVTVTTEESRTLVDVAAEAGVYIPTL.

Belongs to the complex I 75 kDa subunit family. Tetramer of an alpha and a gamma subunits (flavin-containing dimer), and a delta and a nickel-containing beta subunits (hydrogenase dimer). [4Fe-4S] cluster is required as a cofactor.

The protein localises to the cytoplasm. It carries out the reaction H2 + NAD(+) = NADH + H(+). Subunits alpha and gamma of HoxS constitute an NADH--oxidoreductase. The chain is NAD-reducing hydrogenase HoxS subunit gamma (hoxU) from Rhodococcus opacus (Nocardia opaca).